Consider the following 174-residue polypeptide: Cytidylate kinase (174 aa).

7 to 15 (GLPGTGTTT) lines the ATP pocket.

The protein belongs to the cytidylate kinase family. Type 2 subfamily.

It is found in the cytoplasm. It carries out the reaction CMP + ATP = CDP + ADP. The catalysed reaction is dCMP + ATP = dCDP + ADP. The sequence is that of Cytidylate kinase from Methanococcus vannielii (strain ATCC 35089 / DSM 1224 / JCM 13029 / OCM 148 / SB).